Here is a 119-residue protein sequence, read N- to C-terminus: Small ribosomal subunit protein uS13m (119 aa).

The protein belongs to the universal ribosomal protein uS13 family. Part of the small ribosomal subunit.

The protein resides in the mitochondrion. In terms of biological role, located at the top of the head of the small subunit, it contacts several helices of the small subunit rRNA. This chain is Small ribosomal subunit protein uS13m (RPS13), found in Prototheca wickerhamii.